The chain runs to 235 residues: Small ribosomal subunit protein uS3 (235 aa).

The KH type-2 domain occupies 39 to 107; the sequence is VRQFLNKELA…PAQINIAEVK (69 aa). Over residues 215–226 the composition is skewed to low complexity; it reads AQQPEQQPATPK. Residues 215–235 are disordered; it reads AQQPEQQPATPKKAPRGKGRK.

It belongs to the universal ribosomal protein uS3 family. As to quaternary structure, part of the 30S ribosomal subunit. Forms a tight complex with proteins S10 and S14.

Its function is as follows. Binds the lower part of the 30S subunit head. Binds mRNA in the 70S ribosome, positioning it for translation. This Histophilus somni (strain 129Pt) (Haemophilus somnus) protein is Small ribosomal subunit protein uS3.